Consider the following 634-residue polypeptide: (-)-limonene synthase, chloroplastic (634 aa).

The N-terminal 21 residues, 1 to 21 (MSPVSAIPLAYKLCLPRSLIS), are a transit peptide targeting the chloroplast. (2E)-geranyl diphosphate contacts are provided by Arg-348, Asp-385, Asp-389, Arg-526, and Gly-529. Asp-385 and Asp-389 together coordinate Mg(2+). A DDXXD motif motif is present at residues 385-389 (DDIYD). Positions 529 and 537 each coordinate Mg(2+).

It belongs to the terpene synthase family. Tpsb subfamily. Monomer. It depends on Mg(2+) as a cofactor. Requires Mn(2+) as cofactor.

It is found in the plastid. The protein localises to the chloroplast. It carries out the reaction (2E)-geranyl diphosphate = (4S)-limonene + diphosphate. Its pathway is secondary metabolite biosynthesis; terpenoid biosynthesis. The protein operates within terpene metabolism; oleoresin biosynthesis. Monoterpene synthase (mono-TPS) involved in the biosynthesis of monoterpene natural products. Catalyzes the conversion of (2E)-geranyl diphosphate (GPP) into (-)-limonene. Not able to use geranylgeranyl pyrophosphate (GGPP) and farnesyl pyrophosphate (FPP) as substrates. The polypeptide is (-)-limonene synthase, chloroplastic (Picea sitchensis (Sitka spruce)).